Reading from the N-terminus, the 372-residue chain is Queuine tRNA-ribosyltransferase (372 aa).

Asp92 (proton acceptor) is an active-site residue. Substrate-binding positions include 92 to 96 (DSGGF), Asp146, Gln188, and Gly215. Positions 246 to 252 (GIGTLRE) are RNA binding. Asp265 (nucleophile) is an active-site residue. Residues 270–274 (TRLGR) are RNA binding; important for wobble base 34 recognition. Zn(2+) is bound by residues Cys303, Cys305, Cys308, and His334.

The protein belongs to the queuine tRNA-ribosyltransferase family. In terms of assembly, homodimer. Within each dimer, one monomer is responsible for RNA recognition and catalysis, while the other monomer binds to the replacement base PreQ1. It depends on Zn(2+) as a cofactor.

The catalysed reaction is 7-aminomethyl-7-carbaguanine + guanosine(34) in tRNA = 7-aminomethyl-7-carbaguanosine(34) in tRNA + guanine. Its pathway is tRNA modification; tRNA-queuosine biosynthesis. Catalyzes the base-exchange of a guanine (G) residue with the queuine precursor 7-aminomethyl-7-deazaguanine (PreQ1) at position 34 (anticodon wobble position) in tRNAs with GU(N) anticodons (tRNA-Asp, -Asn, -His and -Tyr). Catalysis occurs through a double-displacement mechanism. The nucleophile active site attacks the C1' of nucleotide 34 to detach the guanine base from the RNA, forming a covalent enzyme-RNA intermediate. The proton acceptor active site deprotonates the incoming PreQ1, allowing a nucleophilic attack on the C1' of the ribose to form the product. After dissociation, two additional enzymatic reactions on the tRNA convert PreQ1 to queuine (Q), resulting in the hypermodified nucleoside queuosine (7-(((4,5-cis-dihydroxy-2-cyclopenten-1-yl)amino)methyl)-7-deazaguanosine). The chain is Queuine tRNA-ribosyltransferase from Prochlorococcus marinus (strain MIT 9303).